A 264-amino-acid polypeptide reads, in one-letter code: 3-methyl-2-oxobutanoate hydroxymethyltransferase (264 aa).

The Mg(2+) site is built by Asp-45 and Asp-84. Residues 45 to 46 (DS), Asp-84, and Lys-112 each bind 3-methyl-2-oxobutanoate. Glu-114 contributes to the Mg(2+) binding site. The active-site Proton acceptor is Glu-181.

The protein belongs to the PanB family. Homodecamer; pentamer of dimers. It depends on Mg(2+) as a cofactor.

The protein resides in the cytoplasm. It carries out the reaction 3-methyl-2-oxobutanoate + (6R)-5,10-methylene-5,6,7,8-tetrahydrofolate + H2O = 2-dehydropantoate + (6S)-5,6,7,8-tetrahydrofolate. It functions in the pathway cofactor biosynthesis; (R)-pantothenate biosynthesis; (R)-pantoate from 3-methyl-2-oxobutanoate: step 1/2. Functionally, catalyzes the reversible reaction in which hydroxymethyl group from 5,10-methylenetetrahydrofolate is transferred onto alpha-ketoisovalerate to form ketopantoate. This is 3-methyl-2-oxobutanoate hydroxymethyltransferase from Pseudoalteromonas translucida (strain TAC 125).